The sequence spans 392 residues: 2'-deamino-2'-hydroxyneamine transaminase (392 aa).

N6-(pyridoxal phosphate)lysine is present on Lys-249.

Belongs to the class-III pyridoxal-phosphate-dependent aminotransferase family. The cofactor is pyridoxal 5'-phosphate.

It catalyses the reaction neamine + 2-oxoglutarate = 6'-oxoparomamine + L-glutamate. The catalysed reaction is 2'-deamino-2'-hydroxyneamine + 2-oxoglutarate = 2'-deamino-2'-hydroxy-6'-dehydroparomamine + L-glutamate. Its pathway is antibiotic biosynthesis; kanamycin biosynthesis. In terms of biological role, aminotransferase that has 6'-oxoglucosaminyl:L-glutamate aminotransferase activity by catalyzing pyridoxal-5'-phosphate-mediated transamination leading to the conversion of paromamine to neamine in the biosynthetic pathway of kanamycin B. This is 2'-deamino-2'-hydroxyneamine transaminase (kacL) from Streptomyces kanamyceticus.